Here is a 176-residue protein sequence, read N- to C-terminus: Sperm-egg fusion protein TMEM95 (176 aa).

A signal peptide spans 1-16 (MWVLALGGAFLAVAKA). Disulfide bonds link Cys17–Cys119, Cys20–Cys122, Cys106–Cys129, and Cys110–Cys135. The Extracellular segment spans residues 17 to 146 (CIFCRLQDHA…PDSHDLWDAR (130 aa)). Asn36 and Asn118 each carry an N-linked (GlcNAc...) asparagine glycan. A helical membrane pass occupies residues 147-167 (ILLLCIFGIVLLSGVVSLQVE). At 168–176 (YLNLQAKDL) the chain is on the cytoplasmic side.

It belongs to the TMEM95 family. Does not interact with sperm-egg fusion proteins IZUMO1 or IZUMO1R/JUNO. N-glycosylated. In terms of tissue distribution, expressed exclusively in testis.

It is found in the cytoplasmic vesicle. Its subcellular location is the secretory vesicle. The protein localises to the acrosome membrane. Its function is as follows. Sperm protein required for fusion of sperm with the egg membrane during fertilization. The protein is Sperm-egg fusion protein TMEM95 of Mus musculus (Mouse).